Here is a 443-residue protein sequence, read N- to C-terminus: ATP-dependent protease ATPase subunit HslU (443 aa).

Residues Ile-18, 60-65 (GVGKTE), Asp-256, Glu-321, and Arg-393 each bind ATP.

The protein belongs to the ClpX chaperone family. HslU subfamily. A double ring-shaped homohexamer of HslV is capped on each side by a ring-shaped HslU homohexamer. The assembly of the HslU/HslV complex is dependent on binding of ATP.

The protein resides in the cytoplasm. In terms of biological role, ATPase subunit of a proteasome-like degradation complex; this subunit has chaperone activity. The binding of ATP and its subsequent hydrolysis by HslU are essential for unfolding of protein substrates subsequently hydrolyzed by HslV. HslU recognizes the N-terminal part of its protein substrates and unfolds these before they are guided to HslV for hydrolysis. This Shigella dysenteriae serotype 1 (strain Sd197) protein is ATP-dependent protease ATPase subunit HslU.